We begin with the raw amino-acid sequence, 674 residues long: Zyxin (674 aa).

The tract at residues 35–447 is disordered; the sequence is PPKPKVNPFR…PHQDQTSGSQ (413 aa). Positions 86–109 are enriched in pro residues; the sequence is LPPPPPNEEPMSPPGSSFPPPPPS. Low complexity predominate over residues 110 to 120; sequence FGDDGPGSPLG. Pro residues-rich tracts occupy residues 121–148, 162–180, 187–209, 222–240, and 254–266; these read LFPP…PPPL, ASVP…PAPP, KPAP…PPQS, KPSP…PPVA, and AAPP…PPAP. Basic and acidic residues-rich tracts occupy residues 328–341 and 358–387; these read AKHE…KHEA and QRDK…RGER. 3 LIM zinc-binding domains span residues 481–542, 543–600, and 601–671; these read ELCG…TLEC, CAVC…RRYA, and PRCT…RARA.

Belongs to the zyxin/ajuba family. Interacts (via LIM2 domain) with hesx1/anf1.

Its subcellular location is the cytoplasm. The protein localises to the cytoskeleton. The protein resides in the cell junction. It is found in the focal adhesion. Its function is as follows. Adhesion plaque protein. May be a component of a signal transduction pathway that mediates adhesion-stimulated changes in gene expression. Suppresses the transcription-repressing activity of hesx1/anf1. The sequence is that of Zyxin from Xenopus tropicalis (Western clawed frog).